The sequence spans 100 residues: Double-stranded DNA-binding protein (100 aa).

The DNA-binding element occupies 1-19 (MRKMMQREVTYTTAQLARM).

In terms of assembly, homodimer. Homomultimer. Binds to double-stranded DNA giving rise to multimeric nucleoprotein complexes.

Functionally, histone-like nucleoprotein that binds to the viral dsDNA and responsible for wrapping and condensing the viral DNA about 4-fold. Forms a nucleoprotein complex in which the DNA adopts a right-handed toroidal conformation winding around a protein core. Binding specificity for the viral genome is based on supercoiling. The formation of the nucleoprotein complex at the genome ends, for which the binding affinity is highest, activates the initiation of viral DNA replication. The binding of p6 would recruit the complex formed by the TP and the DNA polymerase to the origin. Protein p6 is also involved in the early to late transcription switch. This is Double-stranded DNA-binding protein from Bacillus phage Nf (Bacteriophage Nf).